An 82-amino-acid polypeptide reads, in one-letter code: Modifier of protein aggregation 4 (82 aa).

Positions 1–23 are enriched in basic and acidic residues; sequence MTRGNQRDLAREKNQKKLADQKK. 2 disordered regions span residues 1–41 and 63–82; these read MTRG…MDAR and EAAAAAANAKKVAKVDPLKM.

This sequence belongs to the SERF family.

Its subcellular location is the cytoplasm. The protein resides in the cytosol. The protein localises to the nucleus. Its function is as follows. Positive regulator of protein aggregation and age-related proteotoxicity. Induces conformational changes in aggregation-prone proteins, driving them into compact formations preceding the formation of aggregates. This chain is Modifier of protein aggregation 4, found in Caenorhabditis elegans.